Reading from the N-terminus, the 254-residue chain is MARIAVTGAAGNVGRVTVEALASDHDVTPITHREREGLDSVILDVRDEDALTEAFEGHDIVVHLAANPNPDAAWDSVYEVNIGGTYNVYEAALAADIDRLVFASTNHVHQMYNIADATRPETLAADAEAVGVSDPPRPDSYYGVSKVFGEALGNYYADRHGLEVLNLRIGWLLTADEVREKMDEEESVARYVRAMWLSPGDCEQGMRRAVEASLPDSPLAVNLISANDDRYLSLTETMRAIGYRPRDNSATVVE.

Residue tyrosine 142 is the Proton acceptor of the active site. NAD(+) is bound by residues tyrosine 142 and lysine 146.

The protein belongs to the NAD(P)-dependent epimerase/dehydratase family. Homotetramer.

The enzyme catalyses alpha-L-arabinopyanose + NAD(+) = L-arabinono-1,4-lactone + NADH + H(+). It catalyses the reaction alpha-L-arabinopyanose + NADP(+) = L-arabinono-1,4-lactone + NADPH + H(+). The protein operates within carbohydrate degradation; L-arabinose degradation via L-arabinono-1,4-lactone pathway. Its function is as follows. L-AraDH initiates the degradation of L-arabinose. Catalyzes the NAD(P)(+)-dependent conversion of L-arabinose to L-arabino-gamma-lactone. It is highly specific for L-arabinose as substrate and can use both NADP(+) and NAD(+) as electron acceptor, with a slight preference for NADP(+). This is L-arabinose 1-dehydrogenase (NAD(P)(+)) from Haloferax volcanii (strain ATCC 29605 / DSM 3757 / JCM 8879 / NBRC 14742 / NCIMB 2012 / VKM B-1768 / DS2) (Halobacterium volcanii).